The primary structure comprises 139 residues: Putative pre-16S rRNA nuclease (139 aa).

This sequence belongs to the YqgF nuclease family.

Its subcellular location is the cytoplasm. Could be a nuclease involved in processing of the 5'-end of pre-16S rRNA. This Pectobacterium carotovorum subsp. carotovorum (strain PC1) protein is Putative pre-16S rRNA nuclease.